A 314-amino-acid chain; its full sequence is Probable dimethyladenosine transferase (314 aa).

S-adenosyl-L-methionine contacts are provided by His-36, Leu-38, Gly-63, Glu-84, Asp-112, and Asn-127.

This sequence belongs to the class I-like SAM-binding methyltransferase superfamily. rRNA adenine N(6)-methyltransferase family. As to quaternary structure, part of the small subunit (SSU) processome, composed of more than 70 proteins and the RNA chaperone small nucleolar RNA (snoRNA) U3.

The protein resides in the nucleus. Its subcellular location is the nucleoplasm. It is found in the nucleolus. It catalyses the reaction adenosine(1779)/adenosine(1780) in 18S rRNA + 4 S-adenosyl-L-methionine = N(6)-dimethyladenosine(1779)/N(6)-dimethyladenosine(1780) in 18S rRNA + 4 S-adenosyl-L-homocysteine + 4 H(+). Functionally, specifically dimethylates two adjacent adenosines in the loop of a conserved hairpin near the 3'-end of 18S rRNA in the 40S particle. Involved in the pre-rRNA processing steps leading to small-subunit rRNA production independently of its RNA-modifying catalytic activity. Part of the small subunit (SSU) processome, first precursor of the small eukaryotic ribosomal subunit. During the assembly of the SSU processome in the nucleolus, many ribosome biogenesis factors, an RNA chaperone and ribosomal proteins associate with the nascent pre-rRNA and work in concert to generate RNA folding, modifications, rearrangements and cleavage as well as targeted degradation of pre-ribosomal RNA by the RNA exosome. The sequence is that of Probable dimethyladenosine transferase (dimt1) from Dictyostelium discoideum (Social amoeba).